A 222-amino-acid polypeptide reads, in one-letter code: Phosphoribosylformylglycinamidine synthase subunit PurQ (222 aa).

One can recognise a Glutamine amidotransferase type-1 domain in the interval 3–222 (AAVVVFPGSN…RALTGALAAV (220 aa)). The active-site Nucleophile is the Cys86. Active-site residues include His194 and Glu196.

Part of the FGAM synthase complex composed of 1 PurL, 1 PurQ and 2 PurS subunits.

It localises to the cytoplasm. The enzyme catalyses N(2)-formyl-N(1)-(5-phospho-beta-D-ribosyl)glycinamide + L-glutamine + ATP + H2O = 2-formamido-N(1)-(5-O-phospho-beta-D-ribosyl)acetamidine + L-glutamate + ADP + phosphate + H(+). It carries out the reaction L-glutamine + H2O = L-glutamate + NH4(+). It participates in purine metabolism; IMP biosynthesis via de novo pathway; 5-amino-1-(5-phospho-D-ribosyl)imidazole from N(2)-formyl-N(1)-(5-phospho-D-ribosyl)glycinamide: step 1/2. In terms of biological role, part of the phosphoribosylformylglycinamidine synthase complex involved in the purines biosynthetic pathway. Catalyzes the ATP-dependent conversion of formylglycinamide ribonucleotide (FGAR) and glutamine to yield formylglycinamidine ribonucleotide (FGAM) and glutamate. The FGAM synthase complex is composed of three subunits. PurQ produces an ammonia molecule by converting glutamine to glutamate. PurL transfers the ammonia molecule to FGAR to form FGAM in an ATP-dependent manner. PurS interacts with PurQ and PurL and is thought to assist in the transfer of the ammonia molecule from PurQ to PurL. In Roseobacter denitrificans (strain ATCC 33942 / OCh 114) (Erythrobacter sp. (strain OCh 114)), this protein is Phosphoribosylformylglycinamidine synthase subunit PurQ.